The sequence spans 884 residues: MTIDKTFDPAAIESRWYTHWEEEGLFHPERPGADPFTLVIPPPNVTGSLHIGHALDDTLQDILVRHARLKGKDALWVVGTDHAGIATQMVVERNLAKIGQKRTDMDRETFVNKVWEWKAESGGTITRQLRRLGASCDWAHERFTMDEGFSKAVIKVFVSLYNEGLIYRDKRLVNWDPHLGTAISDLEVENREVQGHFWHFRYPLEDGSGEIIVATTRPETMLADMAVAVNPEDDRYKALIGKNIRLPITNRLIPIIADIHADPELGSGAVKITPGHDFNDFEVGKRAGIKPADMLNMLDSHARVIQTAENDVPEELIGLDRFEARQIIVEKIDALGLLDKIEDRVIQAPYGDRSGVPIEPWLTDQWYVDAEKLAQPALEAVRSGKIKIIPESWTKTYYNWLENIQPWCISRQLWWGHQIPVWYTDDGQAIVAENEESAQEKAGQGVNLRRDPDVLDTWFSSALWPFATLGWPDTDPKALGRYPNDVLISGFDILFFWDARMIMQGLHFMKDVPFPKLYLHGLVRAADGSKMSKSKGNTVDPLGLIDKYGADALRFTLCAMESQGRDIKLDEKRVEGYRNFATKLWNAVRFAQNNNCAVNTSKQPPEATLTTNRWIIAETAKVARALDQHIEDMRYDELANSLYHFVWNDFCDWYLELIKPILTSTEDQNQGELQETLAVLGWVIDQILIMLHPIMPFITEELWHALGDRDHDLIVAAWPDYKNWSVDETAQNDIDWLIRLITAIRATRSELNVPPALKVPLHSHGIPEKAAHNLERFDPFIKRLARIESIHKEAAPKGAAAQIVVDEATFVLPLEGVIDLDAERGRLKKAIEAVEKEKTATEKRLGNPNFVARAKAEVVAENRERLNNFTGEITKLKAALERLM.

A 'HIGH' region motif is present at residues 43–53 (PNVTGSLHIGH). The 'KMSKS' region motif lies at 530–534 (KMSKS). Lys-533 lines the ATP pocket. A coiled-coil region spans residues 817–884 (VIDLDAERGR…KLKAALERLM (68 aa)).

The protein belongs to the class-I aminoacyl-tRNA synthetase family. ValS type 1 subfamily. Monomer.

It is found in the cytoplasm. The catalysed reaction is tRNA(Val) + L-valine + ATP = L-valyl-tRNA(Val) + AMP + diphosphate. Its function is as follows. Catalyzes the attachment of valine to tRNA(Val). As ValRS can inadvertently accommodate and process structurally similar amino acids such as threonine, to avoid such errors, it has a 'posttransfer' editing activity that hydrolyzes mischarged Thr-tRNA(Val) in a tRNA-dependent manner. This chain is Valine--tRNA ligase, found in Zymomonas mobilis subsp. mobilis (strain ATCC 31821 / ZM4 / CP4).